Consider the following 99-residue polypeptide: Nucleoid-associated protein UUR10_0100 (99 aa).

The protein belongs to the YbaB/EbfC family. In terms of assembly, homodimer.

It is found in the cytoplasm. Its subcellular location is the nucleoid. Its function is as follows. Binds to DNA and alters its conformation. May be involved in regulation of gene expression, nucleoid organization and DNA protection. The protein is Nucleoid-associated protein UUR10_0100 of Ureaplasma urealyticum serovar 10 (strain ATCC 33699 / Western).